The following is a 352-amino-acid chain: Probable cytosolic iron-sulfur protein assembly protein CIAO1 homolog (352 aa).

WD repeat units follow at residues 12–51 (ASNKRLWSLSWNHKGSVLISSGEDRVIKLWAKCNDQLWGS), 58–97 (AHKKSIRCVTWSPCGTYIASASFDGTVTIWKISEAHSAPE), 106–145 (GHTSEVKCVAWCPSGHLIATCGRDKSVWLWEFDDEEDVQC), 151–190 (PHSQDVKSVAWHPHGEVLVSTSYDNKINVYREELDDWTVF), 195–234 (GHDSTVWKAEFSPSGDILASCSDDLCVKLWSWEGVCGKSS), 245–284 (YHTRTIFDLNWSPDSQLLASCGSDNRLCIYKMPANGLTHI), and 303–352 (AHSE…EYEL).

It belongs to the WD repeat CIA1 family.

Its function is as follows. Essential component of the cytosolic iron-sulfur (Fe/S) protein assembly machinery. Required for the maturation of extramitochondrial Fe/S proteins. This Schistosoma japonicum (Blood fluke) protein is Probable cytosolic iron-sulfur protein assembly protein CIAO1 homolog.